A 489-amino-acid polypeptide reads, in one-letter code: Anthranilate synthase component 1 1 (489 aa).

262–264 provides a ligand contact to L-tryptophan; the sequence is PYS. Residues 288-309 form a disordered region; that stretch reads DRIETEPIAGTRPRGETPDADD. 297 to 298 serves as a coordination point for chorismate; it reads GT. A compositionally biased stretch (basic and acidic residues) spans 300 to 309; that stretch reads PRGETPDADD. Glutamate 324 is a Mg(2+) binding site. Residues tyrosine 412, arginine 432, 446–448, and glycine 448 contribute to the chorismate site; that span reads GAG. Glutamate 461 contacts Mg(2+).

It belongs to the anthranilate synthase component I family. Tetramer of two components I and two components II. Mg(2+) serves as cofactor.

It catalyses the reaction chorismate + L-glutamine = anthranilate + pyruvate + L-glutamate + H(+). It functions in the pathway amino-acid biosynthesis; L-tryptophan biosynthesis; L-tryptophan from chorismate: step 1/5. The polypeptide is Anthranilate synthase component 1 1 (trpE1) (Haloarcula marismortui (strain ATCC 43049 / DSM 3752 / JCM 8966 / VKM B-1809) (Halobacterium marismortui)).